Reading from the N-terminus, the 449-residue chain is Exopolygalacturonase X-2 (449 aa).

Residues 1–24 (MGFKRTIGLLLGILLALDQVSVLA) form the signal peptide. N-linked (GlcNAc...) asparagine glycans are attached at residues Asn136, Asn172, and Asn208. One copy of the PbH1 1 repeat lies at 240–261 (SDNVVIQNSVINHDDDCVSFKP). Asp254 functions as the Proton donor in the catalytic mechanism. Cys256 and Cys273 are joined by a disulfide. Residues Asn262 and Asn274 are each glycosylated (N-linked (GlcNAc...) asparagine). PbH1 repeat units follow at residues 263–283 (STNI…SVGS) and 294–315 (VSDL…RLKV). His277 is an active-site residue. Residues Asn301, Asn306, Asn340, and Asn365 are each glycosylated (N-linked (GlcNAc...) asparagine). Cys403 and Cys409 are disulfide-bonded. 2 N-linked (GlcNAc...) asparagine glycosylation sites follow: Asn416 and Asn421.

The protein belongs to the glycosyl hydrolase 28 family.

It is found in the secreted. The catalysed reaction is [(1-&gt;4)-alpha-D-galacturonosyl](n) + H2O = alpha-D-galacturonate + [(1-&gt;4)-alpha-D-galacturonosyl](n-1). Its function is as follows. Specific in hydrolyzing the terminal glycosidic bond of polygalacturonic acid and oligogalacturonates. This is Exopolygalacturonase X-2 (pgaX-2) from Emericella nidulans (strain FGSC A4 / ATCC 38163 / CBS 112.46 / NRRL 194 / M139) (Aspergillus nidulans).